Reading from the N-terminus, the 382-residue chain is Chorismate synthase (382 aa).

Arginine 39 and arginine 45 together coordinate NADP(+). FMN is bound by residues 128–130 (RAS), 246–247 (QA), alanine 290, 305–309 (KPIAT), and arginine 331.

Belongs to the chorismate synthase family. In terms of assembly, homotetramer. FMNH2 serves as cofactor.

It catalyses the reaction 5-O-(1-carboxyvinyl)-3-phosphoshikimate = chorismate + phosphate. Its pathway is metabolic intermediate biosynthesis; chorismate biosynthesis; chorismate from D-erythrose 4-phosphate and phosphoenolpyruvate: step 7/7. Catalyzes the anti-1,4-elimination of the C-3 phosphate and the C-6 proR hydrogen from 5-enolpyruvylshikimate-3-phosphate (EPSP) to yield chorismate, which is the branch point compound that serves as the starting substrate for the three terminal pathways of aromatic amino acid biosynthesis. This reaction introduces a second double bond into the aromatic ring system. This Deinococcus geothermalis (strain DSM 11300 / CIP 105573 / AG-3a) protein is Chorismate synthase.